The primary structure comprises 505 residues: 2,3-bisphosphoglycerate-independent phosphoglycerate mutase (505 aa).

Mn(2+)-binding residues include Asp13 and Ser63. Ser63 acts as the Phosphoserine intermediate in catalysis. Substrate contacts are provided by residues His124, 153–154 (RD), Arg183, Arg189, 254–257 (RADR), and Lys330. Mn(2+) is bound by residues Asp396, His400, Asp437, His438, and His456.

This sequence belongs to the BPG-independent phosphoglycerate mutase family. As to quaternary structure, monomer. The cofactor is Mn(2+).

The enzyme catalyses (2R)-2-phosphoglycerate = (2R)-3-phosphoglycerate. It participates in carbohydrate degradation; glycolysis; pyruvate from D-glyceraldehyde 3-phosphate: step 3/5. Catalyzes the interconversion of 2-phosphoglycerate and 3-phosphoglycerate. In Roseobacter denitrificans (strain ATCC 33942 / OCh 114) (Erythrobacter sp. (strain OCh 114)), this protein is 2,3-bisphosphoglycerate-independent phosphoglycerate mutase.